We begin with the raw amino-acid sequence, 204 residues long: GTP cyclohydrolase 1 (204 aa).

Cys-92, His-95, and Cys-165 together coordinate Zn(2+).

Belongs to the GTP cyclohydrolase I family. As to quaternary structure, homomer.

The catalysed reaction is GTP + H2O = 7,8-dihydroneopterin 3'-triphosphate + formate + H(+). It functions in the pathway cofactor biosynthesis; 7,8-dihydroneopterin triphosphate biosynthesis; 7,8-dihydroneopterin triphosphate from GTP: step 1/1. This Mycolicibacterium paratuberculosis (strain ATCC BAA-968 / K-10) (Mycobacterium paratuberculosis) protein is GTP cyclohydrolase 1.